A 512-amino-acid polypeptide reads, in one-letter code: Cytochrome P450 monooxygenase paxQ (512 aa).

2 helical membrane passes run 3–23 (FVLS…LVSI) and 35–55 (LQIP…ISAL). Residue C453 coordinates heme.

It belongs to the cytochrome P450 family. Heme serves as cofactor.

It localises to the membrane. It participates in secondary metabolite biosynthesis. Cytochrome P450 monooxygenase; part of the gene cluster that mediates the biosynthesis of paxilline, a mycotoxin that acts as an inhibitor of mammalian maxi-K channels. PaxG, the geranylgeranyl diphosphate (GGPP) synthase is proposed to catalyze the first step in paxilline biosynthesis. Condensation of indole-3-glycerol phosphate with GGPP by paxC then forms 3-geranylgeranylindole (3-GGI), followed by epoxidation and cyclization of this intermediate (by paxM and paxB) to form paspaline. Paspaline is subsequently converted to 13-desoxypaxilline by paxP, the latter being then converted to paxilline by paxQ. Finally paxilline can be mono- and di-prenylated by paxD. PaxQ can also utilized beta-paxitriol and alpha-PC-M6 as substrates converting them to alpha-paxitriol. This is Cytochrome P450 monooxygenase paxQ from Penicillium paxilli.